We begin with the raw amino-acid sequence, 224 residues long: Inhibitor of apoptosis protein (224 aa).

Residues 29–92 form a BIR repeat; that stretch reads VDARNQSFAI…AFWSRNCGFM (64 aa). Zn(2+) is bound by residues Cys-62, Cys-65, His-82, and Cys-89.

It belongs to the asfivirus IAP family. In terms of assembly, interacts with subunit p17 of host CASP3.

Its subcellular location is the host cytoplasm. The protein localises to the virion. Prevents apoptosis of host cell by inhibiting caspase-3/CASP3 activation to promote the viral replication. Also induces the activation of host NF-kappaB. In African swine fever virus (isolate Tick/South Africa/Wildebeeslaagte M1/1996) (ASFV), this protein is Inhibitor of apoptosis protein (p27).